A 438-amino-acid polypeptide reads, in one-letter code: Enolase (438 aa).

Residues His-159 and Glu-168 each coordinate substrate. Glu-211 serves as the catalytic Proton donor. Mg(2+)-binding residues include Asp-246, Glu-297, and Asp-322. Substrate is bound by residues Glu-297 and Asp-322. The active-site Proton acceptor is the Lys-347. Residues 374-377 (SHRS) and Lys-398 each bind substrate.

Belongs to the enolase family. As to quaternary structure, homodimer. Requires Mg(2+) as cofactor.

The protein localises to the cytoplasm. It catalyses the reaction (2R)-2-phosphoglycerate = phosphoenolpyruvate + H2O. It participates in carbohydrate degradation; glycolysis; pyruvate from D-glyceraldehyde 3-phosphate: step 4/5. The polypeptide is Enolase (enoA) (Penicillium citrinum).